We begin with the raw amino-acid sequence, 629 residues long: tRNA uridine 5-carboxymethylaminomethyl modification enzyme MnmG (629 aa).

Residues 14–19, valine 126, and serine 181 contribute to the FAD site; that span reads GAGHAG. 273–287 provides a ligand contact to NAD(+); the sequence is GPRYCPSIEDKVVRF. Glutamine 370 is an FAD binding site.

This sequence belongs to the MnmG family. In terms of assembly, homodimer. Heterotetramer of two MnmE and two MnmG subunits. The cofactor is FAD.

Its subcellular location is the cytoplasm. In terms of biological role, NAD-binding protein involved in the addition of a carboxymethylaminomethyl (cmnm) group at the wobble position (U34) of certain tRNAs, forming tRNA-cmnm(5)s(2)U34. The sequence is that of tRNA uridine 5-carboxymethylaminomethyl modification enzyme MnmG from Bacillus thuringiensis (strain Al Hakam).